Consider the following 383-residue polypeptide: Putative dehydratase subunit YjiM (383 aa).

The protein belongs to the FldB/FldC dehydratase alpha/beta subunit family.

The polypeptide is Putative dehydratase subunit YjiM (yjiM) (Escherichia coli (strain K12)).